The chain runs to 130 residues: Small ribosomal subunit protein uS9 (130 aa).

Belongs to the universal ribosomal protein uS9 family.

The sequence is that of Small ribosomal subunit protein uS9 from Mycoplasmoides gallisepticum (strain R(low / passage 15 / clone 2)) (Mycoplasma gallisepticum).